Reading from the N-terminus, the 288-residue chain is 5,10-methylenetetrahydrofolate reductase (288 aa).

FAD is bound by residues Ala51, His73, Gly106, Asp107, Ala118, Tyr140, His144, and Lys159. Asp107 contacts (6S)-5-methyl-5,6,7,8-tetrahydrofolate. Residue Gln175 coordinates (6S)-5-methyl-5,6,7,8-tetrahydrofolate. Gln175 contacts NADH.

It belongs to the methylenetetrahydrofolate reductase family. FAD is required as a cofactor.

The enzyme catalyses (6S)-5-methyl-5,6,7,8-tetrahydrofolate + NAD(+) = (6R)-5,10-methylene-5,6,7,8-tetrahydrofolate + NADH + H(+). It participates in one-carbon metabolism; tetrahydrofolate interconversion. It functions in the pathway amino-acid biosynthesis; L-methionine biosynthesis via de novo pathway. Functionally, catalyzes the NADH-dependent reduction of 5,10-methylenetetrahydrofolate to 5-methyltetrahydrofolate. Is required to provide the methyl group necessary for methionine synthetase to convert homocysteine to methionine; the methyl group is given by 5-methyltetrahydrofolate. Is required for Sphingobium SYK-6 to grow on vanillate or syringate as the sole source of carbon. The polypeptide is 5,10-methylenetetrahydrofolate reductase (Sphingobium sp. (strain NBRC 103272 / SYK-6)).